The chain runs to 56 residues: Small ribosomal subunit protein bS21 (56 aa).

The protein belongs to the bacterial ribosomal protein bS21 family.

This chain is Small ribosomal subunit protein bS21, found in Synechococcus sp. (strain RCC307).